A 317-amino-acid chain; its full sequence is Ribosomal protein L11 methyltransferase (317 aa).

Thr-158, Gly-179, Asp-201, and Asn-244 together coordinate S-adenosyl-L-methionine.

This sequence belongs to the methyltransferase superfamily. PrmA family.

The protein resides in the cytoplasm. The catalysed reaction is L-lysyl-[protein] + 3 S-adenosyl-L-methionine = N(6),N(6),N(6)-trimethyl-L-lysyl-[protein] + 3 S-adenosyl-L-homocysteine + 3 H(+). Methylates ribosomal protein L11. This is Ribosomal protein L11 methyltransferase from Streptococcus pyogenes serotype M18 (strain MGAS8232).